Reading from the N-terminus, the 154-residue chain is Keratin-associated protein 9-9 (154 aa).

14 consecutive repeat copies span residues 8-12, 13-17, 18-22, 37-41, 42-46, 51-55, 56-60, 61-65, 66-70, 75-79, 124-128, 129-133, 134-137, and 148-152. The 14 X 5 AA repeats of C-C-[RQVGE]-[SPSTNQ]-[TASL] stretch occupies residues 8–152; that stretch reads CCQPTCCRTT…TCVSSCCQPS (145 aa).

Belongs to the KRTAP type 9 family. As to quaternary structure, interacts with hair keratins.

Functionally, in the hair cortex, hair keratin intermediate filaments are embedded in an interfilamentous matrix, consisting of hair keratin-associated proteins (KRTAP), which are essential for the formation of a rigid and resistant hair shaft through their extensive disulfide bond cross-linking with abundant cysteine residues of hair keratins. The matrix proteins include the high-sulfur and high-glycine-tyrosine keratins. In Homo sapiens (Human), this protein is Keratin-associated protein 9-9 (KRTAP9-9).